A 718-amino-acid chain; its full sequence is Polyribonucleotide nucleotidyltransferase (718 aa).

2 residues coordinate Mg(2+): D493 and D499. The KH domain occupies P560–I619. The S1 motif domain occupies G629 to K697.

Belongs to the polyribonucleotide nucleotidyltransferase family. The cofactor is Mg(2+).

Its subcellular location is the cytoplasm. It carries out the reaction RNA(n+1) + phosphate = RNA(n) + a ribonucleoside 5'-diphosphate. Functionally, involved in mRNA degradation. Catalyzes the phosphorolysis of single-stranded polyribonucleotides processively in the 3'- to 5'-direction. This chain is Polyribonucleotide nucleotidyltransferase, found in Paraburkholderia phytofirmans (strain DSM 17436 / LMG 22146 / PsJN) (Burkholderia phytofirmans).